The sequence spans 1085 residues: Protein CROWDED NUCLEI 3 (1085 aa).

Coiled coils occupy residues aspartate 51–lysine 149 and arginine 185–leucine 695. Residue lysine 318 forms a Glycyl lysine isopeptide (Lys-Gly) (interchain with G-Cter in ubiquitin) linkage. The Nuclear localization signal signature appears at alanine 404–glutamate 411. Lysine 661 participates in a covalent cross-link: Glycyl lysine isopeptide (Lys-Gly) (interchain with G-Cter in ubiquitin). Residues serine 764, serine 787, serine 825, and serine 843 each carry the phosphoserine modification. Disordered regions lie at residues threonine 801–glutamate 997 and asparagine 1020–lysine 1077. The span at serine 813–serine 825 shows a compositional bias: basic and acidic residues. The span at arginine 854–arginine 868 shows a compositional bias: basic residues. Basic and acidic residues predominate over residues valine 877 to threonine 897. Serine 910 carries the phosphoserine modification. Over residues valine 932–tyrosine 941 the composition is skewed to polar residues. Residues valine 949–lysine 995 are compositionally biased toward basic and acidic residues. Over residues glutamate 1045 to threonine 1066 the composition is skewed to acidic residues.

The protein belongs to the CRWN family. As to quaternary structure, core component of the LINC complex which is composed of inner nuclear membrane SUN domain-containing proteins coupled to outer nuclear membrane WIP proteins, the nucleoskeletal CRWN/LINC proteins, and, possibly, KAKU4. Expressed at low levels in roots, leaves, flowers and flower stalks.

The protein resides in the nucleus membrane. The protein localises to the nucleus. Its subcellular location is the nucleoplasm. It localises to the cytoplasm. It is found in the nucleus lamina. Component of SUN-protein-containing multivariate complexes also called LINC complexes which link the nucleoskeleton and cytoskeleton by providing versatile outer nuclear membrane attachment sites for cytoskeletal filaments. Required for nucleus structure organization (e.g. size and shape). The polypeptide is Protein CROWDED NUCLEI 3 (Arabidopsis thaliana (Mouse-ear cress)).